A 396-amino-acid polypeptide reads, in one-letter code: 1-deoxy-D-xylulose 5-phosphate reductoisomerase (396 aa).

Thr-15, Gly-16, Ser-17, Ile-18, Gly-41, and Asn-129 together coordinate NADPH. A 1-deoxy-D-xylulose 5-phosphate-binding site is contributed by Lys-130. Glu-131 is a binding site for NADPH. Asp-155 contacts Mn(2+). Residues Ser-156, Glu-157, Ser-182, and His-205 each contribute to the 1-deoxy-D-xylulose 5-phosphate site. Residue Glu-157 participates in Mn(2+) binding. Gly-211 is a binding site for NADPH. 1-deoxy-D-xylulose 5-phosphate contacts are provided by Ser-218, Asn-223, Lys-224, and Glu-227. Residue Glu-227 participates in Mn(2+) binding.

The protein belongs to the DXR family. The cofactor is Mg(2+). Mn(2+) is required as a cofactor.

The enzyme catalyses 2-C-methyl-D-erythritol 4-phosphate + NADP(+) = 1-deoxy-D-xylulose 5-phosphate + NADPH + H(+). Its pathway is isoprenoid biosynthesis; isopentenyl diphosphate biosynthesis via DXP pathway; isopentenyl diphosphate from 1-deoxy-D-xylulose 5-phosphate: step 1/6. Catalyzes the NADPH-dependent rearrangement and reduction of 1-deoxy-D-xylulose-5-phosphate (DXP) to 2-C-methyl-D-erythritol 4-phosphate (MEP). The polypeptide is 1-deoxy-D-xylulose 5-phosphate reductoisomerase (Xanthomonas campestris pv. campestris (strain 8004)).